Here is a 219-residue protein sequence, read N- to C-terminus: LexA repressor (219 aa).

A DNA-binding region (H-T-H motif) is located at residues arginine 28–glutamine 48. Residues serine 138 and lysine 175 each act as for autocatalytic cleavage activity in the active site.

This sequence belongs to the peptidase S24 family. Homodimer.

The enzyme catalyses Hydrolysis of Ala-|-Gly bond in repressor LexA.. Its function is as follows. Represses a number of genes involved in the response to DNA damage (SOS response), including recA and lexA. In the presence of single-stranded DNA, RecA interacts with LexA causing an autocatalytic cleavage which disrupts the DNA-binding part of LexA, leading to derepression of the SOS regulon and eventually DNA repair. The polypeptide is LexA repressor (Herminiimonas arsenicoxydans).